We begin with the raw amino-acid sequence, 458 residues long: Argininosuccinate lyase (458 aa).

It belongs to the lyase 1 family. Argininosuccinate lyase subfamily.

The protein resides in the cytoplasm. The catalysed reaction is 2-(N(omega)-L-arginino)succinate = fumarate + L-arginine. It participates in amino-acid biosynthesis; L-arginine biosynthesis; L-arginine from L-ornithine and carbamoyl phosphate: step 3/3. In Salmonella dublin (strain CT_02021853), this protein is Argininosuccinate lyase.